The following is a 308-amino-acid chain: Ribosomal RNA small subunit methyltransferase H (308 aa).

S-adenosyl-L-methionine contacts are provided by residues 36-38, Asp55, Phe86, Asp103, and Gln110; that span reads GGH.

It belongs to the methyltransferase superfamily. RsmH family.

It is found in the cytoplasm. It carries out the reaction cytidine(1402) in 16S rRNA + S-adenosyl-L-methionine = N(4)-methylcytidine(1402) in 16S rRNA + S-adenosyl-L-homocysteine + H(+). Its function is as follows. Specifically methylates the N4 position of cytidine in position 1402 (C1402) of 16S rRNA. The chain is Ribosomal RNA small subunit methyltransferase H from Helicobacter pylori (strain B38).